A 37-amino-acid chain; its full sequence is Natriuretic peptide PNP (37 aa).

Cys14 and Cys30 are disulfide-bonded.

Expressed by the venom gland.

Its subcellular location is the secreted. Functionally, increases urine flow and decreases blood pressure when administered to rats by intravenous injection. Inhibits thrombin-induced platelet aggregation. Stimulates cGMP production via the natriuretic peptide receptor-A (NPR1). This chain is Natriuretic peptide PNP, found in Pseudocerastes persicus (Persian horned viper).